We begin with the raw amino-acid sequence, 234 residues long: uncharacterized protein (234 aa).

10-34 (VVTGASSGIGASIAETLANQGVKVV) contacts NADP(+). Ser-143 is a binding site for substrate. Catalysis depends on Tyr-156, which acts as the Proton acceptor.

It belongs to the short-chain dehydrogenases/reductases (SDR) family.

This is an uncharacterized protein from Staphylococcus saprophyticus subsp. saprophyticus (strain ATCC 15305 / DSM 20229 / NCIMB 8711 / NCTC 7292 / S-41).